The primary structure comprises 298 residues: DNA repair protein RecO (298 aa).

This sequence belongs to the RecO family.

Its function is as follows. Involved in DNA repair and RecF pathway recombination. The chain is DNA repair protein RecO from Cupriavidus metallidurans (strain ATCC 43123 / DSM 2839 / NBRC 102507 / CH34) (Ralstonia metallidurans).